The sequence spans 563 residues: DNA polymerase III subunit tau (563 aa).

Residue 45–52 (GPRGTGKT) coordinates ATP. 4 residues coordinate Zn(2+): Cys64, Cys73, Cys76, and Cys79.

This sequence belongs to the DnaX/STICHEL family. In terms of assembly, component of the DNA clamp loading complex consisting of tau(3):delta(1):delta'(1). The DNA polymerase III holoenzyme complex contains at least 10 different subunits organized into 3 functionally essential subassemblies: the Pol III core, the beta sliding clamp processivity factor and the clamp-loading complex. The Pol III core (subunits alpha, epsilon and theta) contains the polymerase and the 3'-5' exonuclease proofreading activities. The polymerase is tethered to the template via the dimeric beta sliding clamp processivity factor. The DNA clamp-loading complex assembles the beta sliding clamp onto the primed template and plays a central role in the organization and communication at the replication fork. Forms a complex with replicative DNA helicase DnaB (shown with G.stearothermophilus DnaB) tau(3):DnaB(6); a single ATP hydrolysis even is sufficient for complex formation. Colocalizes with DNA helicases PriA, RecQ and RecS.

Its subcellular location is the cytoplasm. The protein localises to the nucleoid. The enzyme catalyses DNA(n) + a 2'-deoxyribonucleoside 5'-triphosphate = DNA(n+1) + diphosphate. Part of the beta sliding clamp loading complex, which hydrolyzes ATP to load the beta clamp onto primed DNA to form the DNA replication pre-initiation complex. DNA polymerase III is a complex, multichain enzyme responsible for most of the replicative DNA synthesis in bacteria. The polypeptide is DNA polymerase III subunit tau (Bacillus subtilis (strain 168)).